A 124-amino-acid chain; its full sequence is Small ribosomal subunit protein uS12 (124 aa).

Position 89 is a 3-methylthioaspartic acid (aspartate 89).

The protein belongs to the universal ribosomal protein uS12 family. In terms of assembly, part of the 30S ribosomal subunit. Contacts proteins S8 and S17. May interact with IF1 in the 30S initiation complex.

In terms of biological role, with S4 and S5 plays an important role in translational accuracy. Interacts with and stabilizes bases of the 16S rRNA that are involved in tRNA selection in the A site and with the mRNA backbone. Located at the interface of the 30S and 50S subunits, it traverses the body of the 30S subunit contacting proteins on the other side and probably holding the rRNA structure together. The combined cluster of proteins S8, S12 and S17 appears to hold together the shoulder and platform of the 30S subunit. The chain is Small ribosomal subunit protein uS12 from Haemophilus ducreyi (strain 35000HP / ATCC 700724).